The primary structure comprises 485 residues: Delta(14)-sterol reductase ERG24A (485 aa).

4 helical membrane passes run 18 to 38 (FFGPPGAFAISFFLPVLVYVF), 77 to 97 (GLVSWNGTLAVIGYNVLSLIL), 131 to 151 (LAVLAAGTIAQGAEFPVWTFM), and 155 to 175 (FIQILSANIIYSYLVSTFVYV). N-linked (GlcNAc...) asparagine glycosylation occurs at Asn240. A run of 4 helical transmembrane segments spans residues 259–279 (ILITAVQALYVFDSWWNEPAI), 285–305 (ITTDGFGMMLAFGDIVWVPYV), 319–339 (SLGPLGLAAMLGLIGLGFYIF), and 431–451 (AQGWGMLITYFYILYFGILLI).

The protein belongs to the ERG4/ERG24 family.

The protein localises to the endoplasmic reticulum membrane. It catalyses the reaction 4,4-dimethyl-5alpha-cholesta-8,24-dien-3beta-ol + NADP(+) = 4,4-dimethyl-5alpha-cholesta-8,14,24-trien-3beta-ol + NADPH + H(+). It participates in steroid metabolism; ergosterol biosynthesis. Delta(14)-sterol reductase; part of the third module of ergosterol biosynthesis pathway that includes the late steps of the pathway. Catalyzes the reduction of the C14=C15 double bond within 4,4,24-trimethyl ergosta-8,14,24(28)-trienolto produce 4,4-dimethylfecosterol. The third module or late pathway involves the ergosterol synthesis itself through consecutive reactions that mainly occur in the endoplasmic reticulum (ER) membrane. Firstly, the squalene synthase ERG9 catalyzes the condensation of 2 farnesyl pyrophosphate moieties to form squalene, which is the precursor of all steroids. Squalene synthase is crucial for balancing the incorporation of farnesyl diphosphate (FPP) into sterol and nonsterol isoprene synthesis. Secondly, squalene is converted into lanosterol by the consecutive action of the squalene epoxidase ERG1 and the lanosterol synthase ERG7. Then, the delta(24)-sterol C-methyltransferase ERG6 methylates lanosterol at C-24 to produce eburicol. Eburicol is the substrate of the sterol 14-alpha demethylase encoded by CYP51A, CYP51B and CYP51C, to yield 4,4,24-trimethyl ergosta-8,14,24(28)-trienol. CYP51B encodes the enzyme primarily responsible for sterol 14-alpha-demethylation, and plays an essential role in ascospore formation. CYP51A encodes an additional sterol 14-alpha-demethylase, induced on ergosterol depletion and responsible for the intrinsic variation in azole sensitivity. The third CYP51 isoform, CYP51C, does not encode a sterol 14-alpha-demethylase, but is required for full virulence on host wheat ears. The C-14 reductase ERG24 then reduces the C14=C15 double bond which leads to 4,4-dimethylfecosterol. A sequence of further demethylations at C-4, involving the C-4 demethylation complex containing the C-4 methylsterol oxidases ERG25, the sterol-4-alpha-carboxylate 3-dehydrogenase ERG26 and the 3-keto-steroid reductase ERG27, leads to the production of fecosterol via 4-methylfecosterol. ERG28 has a role as a scaffold to help anchor ERG25, ERG26 and ERG27 to the endoplasmic reticulum. The C-8 sterol isomerase ERG2 then catalyzes the reaction which results in unsaturation at C-7 in the B ring of sterols and thus converts fecosterol to episterol. The sterol-C5-desaturases ERG3A and ERG3BB then catalyze the introduction of a C-5 double bond in the B ring to produce 5-dehydroepisterol. The C-22 sterol desaturases ERG5A and ERG5B further convert 5-dehydroepisterol into ergosta-5,7,22,24(28)-tetraen-3beta-ol by forming the C-22(23) double bond in the sterol side chain. Finally, ergosta-5,7,22,24(28)-tetraen-3beta-ol is substrate of the C-24(28) sterol reductase ERG4 to produce ergosterol. This Gibberella zeae (strain ATCC MYA-4620 / CBS 123657 / FGSC 9075 / NRRL 31084 / PH-1) (Wheat head blight fungus) protein is Delta(14)-sterol reductase ERG24A.